Here is a 255-residue protein sequence, read N- to C-terminus: Folate receptor beta (255 aa).

The N-terminal stretch at 1-16 is a signal peptide; that stretch reads MVWKWMPLLLLLVCVA. 8 disulfide bridges follow: C31-C59, C51-C99, C60-C103, C83-C169, C90-C140, C129-C203, C133-C183, and C146-C163. Residues D97 and Y101 each coordinate folate. N115 carries an N-linked (GlcNAc...) asparagine glycan. Residues 118 to 122, 151 to 156, and S190 contribute to the folate site; these read WRKER and HRGWDW. N195 is a glycosylation site (N-linked (GlcNAc...) asparagine). N230 carries the GPI-anchor amidated asparagine lipid modification. The propeptide at 231–255 is removed in mature form; it reads AGEMLHGTGGLLLSLALMLQLWLLG.

Belongs to the folate receptor family. Post-translationally, N-glycosylated. In terms of tissue distribution, expressed in placenta and hematopoietic cells. Expression is increased in malignant tissues.

It is found in the cell membrane. It localises to the secreted. Binds to folate and reduced folic acid derivatives and mediates delivery of 5-methyltetrahydrofolate and folate analogs into the interior of cells. Has high affinity for folate and folic acid analogs at neutral pH. Exposure to slightly acidic pH after receptor endocytosis triggers a conformation change that strongly reduces its affinity for folates and mediates their release. The sequence is that of Folate receptor beta (FOLR2) from Homo sapiens (Human).